The following is a 347-amino-acid chain: Ribosomal RNA small subunit methyltransferase C (347 aa).

The protein belongs to the methyltransferase superfamily. RsmC family. In terms of assembly, monomer.

Its subcellular location is the cytoplasm. The enzyme catalyses guanosine(1207) in 16S rRNA + S-adenosyl-L-methionine = N(2)-methylguanosine(1207) in 16S rRNA + S-adenosyl-L-homocysteine + H(+). Specifically methylates the guanine in position 1207 of 16S rRNA in the 30S particle. This Yersinia pseudotuberculosis serotype O:1b (strain IP 31758) protein is Ribosomal RNA small subunit methyltransferase C.